The following is a 191-amino-acid chain: Shikimate kinase (191 aa).

Residue 24–29 (GSGKTS) coordinates ATP. Threonine 28 is a binding site for Mg(2+). 3 residues coordinate substrate: aspartate 46, arginine 70, and glycine 92. An ATP-binding site is contributed by arginine 130. Arginine 149 contributes to the substrate binding site.

This sequence belongs to the shikimate kinase family. In terms of assembly, monomer. The cofactor is Mg(2+).

It is found in the cytoplasm. The enzyme catalyses shikimate + ATP = 3-phosphoshikimate + ADP + H(+). It participates in metabolic intermediate biosynthesis; chorismate biosynthesis; chorismate from D-erythrose 4-phosphate and phosphoenolpyruvate: step 5/7. In terms of biological role, catalyzes the specific phosphorylation of the 3-hydroxyl group of shikimic acid using ATP as a cosubstrate. This chain is Shikimate kinase, found in Synechococcus sp. (strain CC9902).